A 331-amino-acid chain; its full sequence is UPF0194 membrane protein YbhG (331 aa).

Positions 1–19 (MKKPVVIGLAIAAIVAVIA) are cleaved as a signal peptide. Residues 107 to 208 (EEIAQAAAAV…LDLQDTTLIA (102 aa)) adopt a coiled-coil conformation.

The protein belongs to the UPF0194 family.

Its subcellular location is the periplasm. This Salmonella agona (strain SL483) protein is UPF0194 membrane protein YbhG.